The primary structure comprises 367 residues: uncharacterized protein (367 aa).

4 helical membrane passes run 35–55, 61–81, 92–112, and 113–133; these read YVYDISLIAISILCIVSIILW, LALFAIAPALAIGALGVTLLV, EVADTVAAVSLPFILTGTAAG, and LMFSAIAVGGGAVILANPLFL. 3 disordered regions span residues 177-220, 249-283, and 296-367; these read KLPK…PASI, SNIKKELPNTKSILHTPLNRRSPSGSDSDDVYYTP, and GDIS…SRPK. Over residues 257–274 the composition is skewed to polar residues; the sequence is NTKSILHTPLNRRSPSGS. The segment covering 302 to 312 has biased composition (low complexity); that stretch reads SSSSTSSKTST. Basic and acidic residues predominate over residues 323–342; sequence SRSERNARHHRNKEDHRQNQ. Basic residues predominate over residues 357 to 367; it reads PRRKKYRSRPK.

Belongs to the chlamydial CPn_0443/CT_005/TC_0273 family.

Its subcellular location is the cell membrane. This is an uncharacterized protein from Chlamydia muridarum (strain MoPn / Nigg).